A 48-amino-acid chain; its full sequence is MRSRASAEGIAVLGLRRRGESPVCRRRNVVVCFWGDRSCVEREGCVRG.

The residue at position 45 (Cys45) is a Cysteine methyl ester. Cys45 carries the S-farnesyl cysteine lipid modification. A propeptide spans 46–48 (removed in mature form); that stretch reads VRG.

The protein localises to the cell membrane. Activates B-regulated development. The polypeptide is Mating-type pheromone BAP1(2) (BAP1(2)) (Schizophyllum commune (Split gill fungus)).